A 1759-amino-acid polypeptide reads, in one-letter code: Collagen alpha-1(IV) chain (1759 aa).

The N-terminal stretch at 1-20 is a signal peptide; sequence MSRLSLLGLTAAVVLLSSFC. Positions 21 to 194 are cleaved as a propeptide — N-terminal propeptide (7S domain); the sequence is QDRIHVDAAA…PGNSGYPGLK (174 aa). Disordered regions lie at residues 51-245, 269-415, 548-596, 618-650, 666-720, and 787-1522; these read PGFG…GSYP, KGRD…GIDG, AGDP…PGLP, PAGI…GGPG, IDGK…RGIP, and RGQQ…GTPG. Composition is skewed to low complexity over residues 104 to 116, 140 to 153, and 278 to 293; these read HPGL…LPGL, PPGQ…PGRP, and PGML…PGLK. The interval 195 to 1530 is triple-helical region; sequence GAKGDPGPYG…PGYPGSPGGW (1336 aa). Gly residues-rich tracts occupy residues 324 to 345, 360 to 370, and 379 to 388; these read GEQG…GEPG, GPLGEGTGEAG, and GVQGGKGLPG. Composition is skewed to low complexity over residues 399 to 411 and 574 to 595; these read RGPV…PGQP and MPGA…SPGL. Over residues 833–848 the composition is skewed to low complexity; sequence YPGPNGDAGAAGLPGP. The span at 904–913 shows a compositional bias: gly residues; that stretch reads GQDGGPGYSG. 4 stretches are compositionally biased toward low complexity: residues 1037–1047, 1219–1232, 1247–1271, and 1281–1309; these read YPGQPGDVGYP, ENGD…DGQP, PGRD…PGQD, and QDGY…YGMP. Residues 1310–1319 show a composition bias toward gly residues; it reads GLPGGPGESG. Residues 1341-1357 show a composition bias toward low complexity; that stretch reads LPGAPGVPGVEGVPGLE. Residues 1410-1422 are compositionally biased toward basic and acidic residues; that stretch reads PRGDDGFPGRDGL. 2 stretches are compositionally biased toward low complexity: residues 1423 to 1437 and 1472 to 1482; these read DGLP…LPGP and PPGKAGYPGAP. Residues 1495-1504 show a composition bias toward gly residues; the sequence is GMPGHGGDQG. The Collagen IV NC1 domain occupies 1535-1759; sequence GFTFAKHSQT…SRCQVCLKNR (225 aa). Intrachain disulfides connect Cys1550/Cys1641, Cys1583/Cys1638, Cys1595/Cys1601, Cys1660/Cys1755, Cys1694/Cys1752, and Cys1706/Cys1712. Residue Met1623 forms an S-Lysyl-methionine sulfilimine (Met-Lys) (interchain with K-1741) linkage. Lys1741 participates in a covalent cross-link: S-Lysyl-methionine sulfilimine (Lys-Met) (interchain with M-1623).

It belongs to the type IV collagen family. Trimers of two alpha 1(IV) and one alpha 2(IV) chain. Type IV collagen forms a mesh-like network linked through intermolecular interactions between 7S domains and between NC1 domains. In terms of processing, prolines at the third position of the tripeptide repeating unit (G-X-Y) are hydroxylated in some or all of the chains. Type IV collagens contain numerous cysteine residues which are involved in inter- and intramolecular disulfide bonding. 12 of these, located in the NC1 domain, are conserved in all known type IV collagens. Post-translationally, the trimeric structure of the NC1 domains is stabilized by covalent bonds between Lys and Met residues.

The protein localises to the secreted. It is found in the extracellular space. It localises to the extracellular matrix. Its subcellular location is the basement membrane. In terms of biological role, collagen type IV is specific for basement membranes. Required to restrict presynaptic growth at the neuromuscular junctions (NMJ) in late larval stage and in adult motor neurons. May play a role in axon regeneration in embryos following injury in D-type motor neurons. The protein is Collagen alpha-1(IV) chain of Caenorhabditis elegans.